Reading from the N-terminus, the 640-residue chain is Glutamyl-tRNA(Gln) amidotransferase subunit E (640 aa).

The protein belongs to the GatB/GatE family. GatE subfamily. In terms of assembly, heterodimer of GatD and GatE.

The enzyme catalyses L-glutamyl-tRNA(Gln) + L-glutamine + ATP + H2O = L-glutaminyl-tRNA(Gln) + L-glutamate + ADP + phosphate + H(+). Allows the formation of correctly charged Gln-tRNA(Gln) through the transamidation of misacylated Glu-tRNA(Gln) in organisms which lack glutaminyl-tRNA synthetase. The reaction takes place in the presence of glutamine and ATP through an activated gamma-phospho-Glu-tRNA(Gln). The GatDE system is specific for glutamate and does not act on aspartate. This chain is Glutamyl-tRNA(Gln) amidotransferase subunit E, found in Methanopyrus kandleri (strain AV19 / DSM 6324 / JCM 9639 / NBRC 100938).